The following is a 98-amino-acid chain: NADH-ubiquinone oxidoreductase chain 4L (98 aa).

3 consecutive transmembrane segments (helical) span residues 1 to 21, 29 to 49, and 61 to 81; these read MSLVYMNIMTAFMVSLAGLLM, SLLCLEGMMLSLFVLATLTIL, and IILLVFAACEAALGLSLLVMV.

The protein belongs to the complex I subunit 4L family. In terms of assembly, core subunit of respiratory chain NADH dehydrogenase (Complex I) which is composed of 45 different subunits.

It is found in the mitochondrion inner membrane. It catalyses the reaction a ubiquinone + NADH + 5 H(+)(in) = a ubiquinol + NAD(+) + 4 H(+)(out). In terms of biological role, core subunit of the mitochondrial membrane respiratory chain NADH dehydrogenase (Complex I) which catalyzes electron transfer from NADH through the respiratory chain, using ubiquinone as an electron acceptor. Part of the enzyme membrane arm which is embedded in the lipid bilayer and involved in proton translocation. In Muntiacus feae (Fea's muntjac), this protein is NADH-ubiquinone oxidoreductase chain 4L (MT-ND4L).